Reading from the N-terminus, the 338-residue chain is UbiA prenyltransferase domain-containing protein 1 (338 aa).

An N-acetylalanine modification is found at A2. Transmembrane regions (helical) follow at residues 83–103 (LLVG…LVNT), 134–154 (FGVF…YLSP), 160–180 (LALI…GIGF), 188–208 (LIIL…IQVG), 209–229 (SLAI…EAIL), 245–267 (IVTL…LLFL), 277–297 (THCT…FSLE), and 315–335 (LNLL…AGSL).

Belongs to the UbiA prenyltransferase family. Interacts with HMGCR and SOAT1. As to expression, ubiquitously expressed.

It is found in the endoplasmic reticulum membrane. Its subcellular location is the golgi apparatus membrane. The protein localises to the mitochondrion membrane. It localises to the cytoplasm. The protein resides in the nucleus. It carries out the reaction menadiol + (2E,6E,10E)-geranylgeranyl diphosphate = menaquinol-4 + diphosphate. The catalysed reaction is all-trans-decaprenyl diphosphate + 4-hydroxybenzoate = 4-hydroxy-3-(all-trans-decaprenyl)benzoate + diphosphate. It functions in the pathway quinol/quinone metabolism; menaquinone biosynthesis. It participates in cofactor biosynthesis; ubiquinone biosynthesis. In terms of biological role, prenyltransferase that mediates the formation of menaquinone-4 (MK-4) and coenzyme Q10. MK-4 is a vitamin K2 isoform present at high concentrations in the brain, kidney and pancreas, and is required for endothelial cell development. Mediates the conversion of phylloquinone (PK) into MK-4, probably by cleaving the side chain of phylloquinone (PK) to release 2-methyl-1,4-naphthoquinone (menadione; K3) and then prenylating it with geranylgeranyl pyrophosphate (GGPP) to form MK-4. Also plays a role in cardiovascular development independently of MK-4 biosynthesis, by acting as a coenzyme Q10 biosynthetic enzyme: coenzyme Q10, also named ubiquinone, plays an important antioxidant role in the cardiovascular system. Mediates biosynthesis of coenzyme Q10 in the Golgi membrane, leading to protect cardiovascular tissues from NOS3/eNOS-dependent oxidative stress. The protein is UbiA prenyltransferase domain-containing protein 1 of Homo sapiens (Human).